A 65-amino-acid chain; its full sequence is Beta-mammal toxin Tma1 (65 aa).

The LCN-type CS-alpha/beta domain occupies 2–64 (KEGYLVGNDG…TWNSAKNRCG (63 aa)). Disulfide bonds link Cys12/Cys63, Cys16/Cys38, Cys24/Cys44, and Cys28/Cys46.

Belongs to the long (4 C-C) scorpion toxin superfamily. Sodium channel inhibitor family. As to expression, expressed by the venom gland.

The protein localises to the secreted. In terms of biological role, beta toxins bind voltage-independently at site-4 of sodium channels (Nav) and shift the voltage of activation toward more negative potentials thereby affecting sodium channel activation and promoting spontaneous and repetitive firing. This toxin acts on human Nav1.4/SCN4A and Nav1.6/SCN8A voltage-gated sodium channels. This chain is Beta-mammal toxin Tma1, found in Tityus macrochirus (Scorpion).